A 460-amino-acid polypeptide reads, in one-letter code: Citrate synthase, peroxisomal (460 aa).

Ser-21 carries the post-translational modification Phosphoserine. Glycyl lysine isopeptide (Lys-Gly) (interchain with G-Cter in ubiquitin) cross-links involve residues Lys-218 and Lys-239. Residues His-293 and His-339 contribute to the active site. Residues Lys-354 and Lys-385 each participate in a glycyl lysine isopeptide (Lys-Gly) (interchain with G-Cter in ubiquitin) cross-link. Residue Asp-394 is part of the active site. Positions 458–460 (SKL) match the C-terminal peroxisome targeting signal (PTS1) motif.

The protein belongs to the citrate synthase family. As to quaternary structure, interacts with F-box protein UCC1. Post-translationally, ubiquitinated by the E3 ubiquitin-protein ligase complex SCF(UCC1), which leads to its degradation by the proteasome. Ubiquitination is prevented by oxaloacetate, suggesting the existence of an oxaloacetate-dependent positive feedback loop that stabilizes CIT2.

The protein localises to the cytoplasm. It is found in the peroxisome. The catalysed reaction is oxaloacetate + acetyl-CoA + H2O = citrate + CoA + H(+). It functions in the pathway carbohydrate metabolism; tricarboxylic acid cycle; isocitrate from oxaloacetate: step 1/2. Peroxisomal citrate synthase involved in the citrate homeostasis. Catalyzes the condensation of acetyl coenzyme A and oxaloacetate to form citrate. Citrate synthase is the rate-limiting enzyme of the tricarboxylic acid (TCA) cycle. The sequence is that of Citrate synthase, peroxisomal from Saccharomyces cerevisiae (strain ATCC 204508 / S288c) (Baker's yeast).